Reading from the N-terminus, the 336-residue chain is Apyrase (336 aa).

A signal peptide spans 1–21; it reads MFLKFCVVAFAICLSINLSEG. An N-linked (GlcNAc...) asparagine glycan is attached at Asn-209.

The protein belongs to the apyrase family. It depends on Ca(2+) as a cofactor. As to expression, salivary gland (at protein level).

It localises to the secreted. It catalyses the reaction a ribonucleoside 5'-triphosphate + 2 H2O = a ribonucleoside 5'-phosphate + 2 phosphate + 2 H(+). Functionally, facilitates hematophagy by inhibiting ADP- and collagen-dependent platelet aggregation in the host. Cleaves adenosine triphosphate (ATP) and adenosine diphosphate (ADP) to adenosine monophosphate (AMP) and inorganic phosphate in calcium-dependent manner. This is Apyrase from Phlebotomus duboscqi (Sandfly).